A 185-amino-acid chain; its full sequence is Elongation factor P (185 aa).

It belongs to the elongation factor P family.

Its subcellular location is the cytoplasm. It participates in protein biosynthesis; polypeptide chain elongation. In terms of biological role, involved in peptide bond synthesis. Stimulates efficient translation and peptide-bond synthesis on native or reconstituted 70S ribosomes in vitro. Probably functions indirectly by altering the affinity of the ribosome for aminoacyl-tRNA, thus increasing their reactivity as acceptors for peptidyl transferase. The protein is Elongation factor P of Burkholderia multivorans (strain ATCC 17616 / 249).